The chain runs to 145 residues: D-aminoacyl-tRNA deacylase (145 aa).

Residues 137–138 carry the Gly-cisPro motif, important for rejection of L-amino acids motif; the sequence is GP.

Belongs to the DTD family. As to quaternary structure, homodimer.

Its subcellular location is the cytoplasm. It carries out the reaction glycyl-tRNA(Ala) + H2O = tRNA(Ala) + glycine + H(+). It catalyses the reaction a D-aminoacyl-tRNA + H2O = a tRNA + a D-alpha-amino acid + H(+). Functionally, an aminoacyl-tRNA editing enzyme that deacylates mischarged D-aminoacyl-tRNAs. Also deacylates mischarged glycyl-tRNA(Ala), protecting cells against glycine mischarging by AlaRS. Acts via tRNA-based rather than protein-based catalysis; rejects L-amino acids rather than detecting D-amino acids in the active site. By recycling D-aminoacyl-tRNA to D-amino acids and free tRNA molecules, this enzyme counteracts the toxicity associated with the formation of D-aminoacyl-tRNA entities in vivo and helps enforce protein L-homochirality. This chain is D-aminoacyl-tRNA deacylase, found in Klebsiella pneumoniae subsp. pneumoniae (strain ATCC 700721 / MGH 78578).